The primary structure comprises 150 residues: SsrA-binding protein (150 aa).

It belongs to the SmpB family.

The protein localises to the cytoplasm. In terms of biological role, required for rescue of stalled ribosomes mediated by trans-translation. Binds to transfer-messenger RNA (tmRNA), required for stable association of tmRNA with ribosomes. tmRNA and SmpB together mimic tRNA shape, replacing the anticodon stem-loop with SmpB. tmRNA is encoded by the ssrA gene; the 2 termini fold to resemble tRNA(Ala) and it encodes a 'tag peptide', a short internal open reading frame. During trans-translation Ala-aminoacylated tmRNA acts like a tRNA, entering the A-site of stalled ribosomes, displacing the stalled mRNA. The ribosome then switches to translate the ORF on the tmRNA; the nascent peptide is terminated with the 'tag peptide' encoded by the tmRNA and targeted for degradation. The ribosome is freed to recommence translation, which seems to be the essential function of trans-translation. The chain is SsrA-binding protein from Thermotoga maritima (strain ATCC 43589 / DSM 3109 / JCM 10099 / NBRC 100826 / MSB8).